Reading from the N-terminus, the 253-residue chain is Hydroxyacylglutathione hydrolase (253 aa).

Residues H54, H56, D58, H59, H112, D131, and H169 each coordinate Zn(2+).

This sequence belongs to the metallo-beta-lactamase superfamily. Glyoxalase II family. As to quaternary structure, monomer. It depends on Zn(2+) as a cofactor.

The enzyme catalyses an S-(2-hydroxyacyl)glutathione + H2O = a 2-hydroxy carboxylate + glutathione + H(+). Its pathway is secondary metabolite metabolism; methylglyoxal degradation; (R)-lactate from methylglyoxal: step 2/2. In terms of biological role, thiolesterase that catalyzes the hydrolysis of S-D-lactoyl-glutathione to form glutathione and D-lactic acid. The polypeptide is Hydroxyacylglutathione hydrolase (Bartonella henselae (strain ATCC 49882 / DSM 28221 / CCUG 30454 / Houston 1) (Rochalimaea henselae)).